A 315-amino-acid polypeptide reads, in one-letter code: GTP cyclohydrolase MptA 1 (315 aa).

It belongs to the GTP cyclohydrolase IV family. As to quaternary structure, homodimer. Fe(2+) serves as cofactor.

The enzyme catalyses GTP + H2O = 7,8-dihydroneopterin 2',3'-cyclic phosphate + formate + diphosphate + H(+). It functions in the pathway cofactor biosynthesis; 5,6,7,8-tetrahydromethanopterin biosynthesis. In terms of biological role, converts GTP to 7,8-dihydro-D-neopterin 2',3'-cyclic phosphate, the first intermediate in the biosynthesis of coenzyme methanopterin. The protein is GTP cyclohydrolase MptA 1 of Methanocella arvoryzae (strain DSM 22066 / NBRC 105507 / MRE50).